The following is a 460-amino-acid chain: Cyclic 2,3-diphosphoglycerate synthetase (460 aa).

In terms of assembly, homodimer.

The protein localises to the cytoplasm. It carries out the reaction (2R)-2,3-bisphosphoglycerate + ATP + H(+) = cyclic (2R)-2,3-bisphosphoglycerate + ADP + phosphate. Functionally, catalyzes the formation of cyclic 2,3-diphosphoglycerate (cDPG) by formation of an intramolecular phosphoanhydride bond at the expense of ATP. It is also able to catalyze the hydrolysis of cDPG but with significant slower rates (8-10 times). May be involved in thermoadaptation. The polypeptide is Cyclic 2,3-diphosphoglycerate synthetase (cpgS) (Methanothermus fervidus (strain ATCC 43054 / DSM 2088 / JCM 10308 / V24 S)).